The following is a 364-amino-acid chain: Fructose-bisphosphate aldolase C (364 aa).

Residue Tyr-5 is modified to Phosphotyrosine. Residues Ser-36, Ser-39, and Ser-45 each carry the phosphoserine modification. Arg-56 is a binding site for substrate. Position 111 is an N6-acetyllysine (Lys-111). Phosphoserine is present on Ser-132. Lys-147 is a substrate binding site. Glu-188 serves as the catalytic Proton acceptor. The Schiff-base intermediate with dihydroxyacetone-P role is filled by Lys-230.

It belongs to the class I fructose-bisphosphate aldolase family. In terms of assembly, homotetramer. Interacts with ATP6V1E1. May interact with PLD2.

The catalysed reaction is beta-D-fructose 1,6-bisphosphate = D-glyceraldehyde 3-phosphate + dihydroxyacetone phosphate. Its pathway is carbohydrate degradation; glycolysis; D-glyceraldehyde 3-phosphate and glycerone phosphate from D-glucose: step 4/4. The sequence is that of Fructose-bisphosphate aldolase C (ALDOC) from Homo sapiens (Human).